Here is a 708-residue protein sequence, read N- to C-terminus: Probable GTP diphosphokinase RSH3, chloroplastic (708 aa).

Disordered stretches follow at residues 1–50 (MSLP…AAGG) and 109–134 (HSPVSVFQGPSSSPAASRSPPASWLA). Residues 1–58 (MSLPAISLYTSPPPGAVYSSEFDPSSRGSSPPCSTAPPSTSHRPPAAAGGLSCLFSSP) constitute a chloroplast transit peptide. Composition is skewed to low complexity over residues 29 to 41 (SSPPCSTAPPSTS) and 118 to 131 (PSSSPAASRSPPAS). Positions 233-337 (YLQHCVETAV…IKLADRVHNM (105 aa)) constitute an HD domain.

It belongs to the RelA/SpoT family.

The protein resides in the plastid. The protein localises to the chloroplast. It carries out the reaction GTP + ATP = guanosine 3'-diphosphate 5'-triphosphate + AMP. Probable ppGpp (guanosine 3'-diphosphate 5'-diphosphate) synthetase that may be involved in a rapid plant ppGpp-mediated response to pathogens and other stresses. This is Probable GTP diphosphokinase RSH3, chloroplastic (RSH3) from Oryza sativa subsp. japonica (Rice).